Consider the following 503-residue polypeptide: Aminoaldehyde dehydrogenase 1, peroxisomal (503 aa).

3 residues coordinate Na(+): I28, D99, and L189. 238-245 (GSTMTGSK) provides a ligand contact to NAD(+). E260 serves as the catalytic Proton acceptor. Positions 294 and 393 each coordinate NAD(+). C294 functions as the Nucleophile in the catalytic mechanism.

It belongs to the aldehyde dehydrogenase family. Expressed in leaves, flowers and fruits.

It is found in the cytoplasm. The protein resides in the cytosol. It catalyses the reaction 4-aminobutanal + NAD(+) + H2O = 4-aminobutanoate + NADH + 2 H(+). The enzyme catalyses 3-aminopropanal + NAD(+) + H2O = beta-alanine + NADH + 2 H(+). Its pathway is amine and polyamine biosynthesis; betaine biosynthesis via choline pathway; betaine from betaine aldehyde: step 1/1. Its function is as follows. Dehydrogenase that catalyzes the oxidation of several aminoaldehydes. Metabolizes and detoxifies aldehyde products of polyamine degradation to non-toxic amino acids. Catalyzes the oxidation of 4-aminobutanal and 3-aminopropanal to 4-aminobutanoate and beta-alanine, respectively. The protein is Aminoaldehyde dehydrogenase 1, peroxisomal of Malus domestica (Apple).